A 155-amino-acid chain; its full sequence is Secreted RxLR effector protein RXLR-C301 (155 aa).

An N-terminal signal peptide occupies residues 1–24; the sequence is MRLYALSVSLLAAITLLACVIASA. The short motif at 34 to 64 is the RxLR-dEER element; sequence RRLSQDVSETEITELSESKKPTAQDIDNEER.

It belongs to the RxLR effector family.

The protein localises to the secreted. Its subcellular location is the host cell membrane. Its function is as follows. Secreted effector that does not suppress pattern-triggered immunity (PTI) in plant host. This chain is Secreted RxLR effector protein RXLR-C301, found in Plasmopara halstedii (Downy mildew of sunflower).